The following is a 285-amino-acid chain: Acetyl-coenzyme A carboxylase carboxyl transferase subunit beta (285 aa).

The CoA carboxyltransferase N-terminal domain maps to 29–285 (IMTKCPKCKK…ILKIHQEVTK (257 aa)). Zn(2+) is bound by residues cysteine 33, cysteine 36, cysteine 52, and cysteine 55. The C4-type zinc-finger motif lies at 33 to 55 (CPKCKKIMYTKELAENLNVCFNC).

It belongs to the AccD/PCCB family. In terms of assembly, acetyl-CoA carboxylase is a heterohexamer composed of biotin carboxyl carrier protein (AccB), biotin carboxylase (AccC) and two subunits each of ACCase subunit alpha (AccA) and ACCase subunit beta (AccD). The cofactor is Zn(2+).

It localises to the cytoplasm. The enzyme catalyses N(6)-carboxybiotinyl-L-lysyl-[protein] + acetyl-CoA = N(6)-biotinyl-L-lysyl-[protein] + malonyl-CoA. It functions in the pathway lipid metabolism; malonyl-CoA biosynthesis; malonyl-CoA from acetyl-CoA: step 1/1. Component of the acetyl coenzyme A carboxylase (ACC) complex. Biotin carboxylase (BC) catalyzes the carboxylation of biotin on its carrier protein (BCCP) and then the CO(2) group is transferred by the transcarboxylase to acetyl-CoA to form malonyl-CoA. This Staphylococcus aureus (strain Newman) protein is Acetyl-coenzyme A carboxylase carboxyl transferase subunit beta.